The following is a 494-amino-acid chain: V-type proton ATPase subunit B (494 aa).

This sequence belongs to the ATPase alpha/beta chains family. As to quaternary structure, V-ATPase is a heteromultimeric enzyme composed of a peripheral catalytic V1 complex (main components: subunits A, B, C, D, E, and F) attached to an integral membrane V0 proton pore complex (main component: the proteolipid protein).

Its function is as follows. Non-catalytic subunit of the peripheral V1 complex of vacuolar ATPase. V-ATPase is responsible for acidifying a variety of intracellular compartments in eukaryotic cells. The sequence is that of V-type proton ATPase subunit B (VAPB) from Plasmodium falciparum.